Here is a 205-residue protein sequence, read N- to C-terminus: Peptidyl-tRNA hydrolase (205 aa).

Tyrosine 18 is a tRNA binding site. Histidine 23 (proton acceptor) is an active-site residue. TRNA contacts are provided by tyrosine 69, asparagine 71, and asparagine 117.

It belongs to the PTH family. As to quaternary structure, monomer.

Its subcellular location is the cytoplasm. It carries out the reaction an N-acyl-L-alpha-aminoacyl-tRNA + H2O = an N-acyl-L-amino acid + a tRNA + H(+). Its function is as follows. Hydrolyzes ribosome-free peptidyl-tRNAs (with 1 or more amino acids incorporated), which drop off the ribosome during protein synthesis, or as a result of ribosome stalling. In terms of biological role, catalyzes the release of premature peptidyl moieties from peptidyl-tRNA molecules trapped in stalled 50S ribosomal subunits, and thus maintains levels of free tRNAs and 50S ribosomes. This chain is Peptidyl-tRNA hydrolase, found in Thermosynechococcus vestitus (strain NIES-2133 / IAM M-273 / BP-1).